The following is a 218-amino-acid chain: GTP cyclohydrolase 1 (218 aa).

Residues Cys109, His112, and Cys180 each contribute to the Zn(2+) site.

The protein belongs to the GTP cyclohydrolase I family. In terms of assembly, toroid-shaped homodecamer, composed of two pentamers of five dimers.

The enzyme catalyses GTP + H2O = 7,8-dihydroneopterin 3'-triphosphate + formate + H(+). Its pathway is cofactor biosynthesis; 7,8-dihydroneopterin triphosphate biosynthesis; 7,8-dihydroneopterin triphosphate from GTP: step 1/1. The chain is GTP cyclohydrolase 1 from Aeromonas salmonicida (strain A449).